Here is a 412-residue protein sequence, read N- to C-terminus: Odorant receptor 47b (412 aa).

Residues 1–74 (MNDSGYQSNL…NLFIMCNVMT (74 aa)) lie on the Cytoplasmic side of the membrane. The chain crosses the membrane as a helical span at residues 75 to 95 (IFWTMFVALPESKNVIEMGDD). The Extracellular segment spans residues 96 to 103 (LVWISGMA). Residues 104 to 124 (LVFTKIFYMHLRCDEIDELIS) traverse the membrane as a helical segment. The Cytoplasmic segment spans residues 125–169 (DFEYYNRELRPHNIDEEVLGWQRLCYVIESGLYINCFCLVNFFSA). Residues 170–190 (AIFLQPLLGEGKLPFHSVYPF) form a helical membrane-spanning segment. At 191–229 (QWHRLDLHPYTFWFLYIWQSLTSQHNLMSILMVDMVGIS) the chain is on the extracellular side. The chain crosses the membrane as a helical span at residues 230–250 (TFLQTALNLKLLCIEIRKLGD). At 251–302 (MEVSDKRFHEEFCRVVRFHQHIIKLVGKANRAFNGAFNAQLMASFSLISIST) the chain is on the cytoplasmic side. The helical transmembrane segment at 303-323 (FETMAAAAVDPKMAAKFVLLM) threads the bilayer. Residues 324-330 (LVAFIQL) are Extracellular-facing. A helical membrane pass occupies residues 331–351 (SLWCVSGTLVYTQSVEVAQAA). Residues 352-389 (FDINDWHTKSPGIQRDISFVILRAQKPLMYVAEPFLPF) lie on the Cytoplasmic side of the membrane. Residues 390-410 (TLGTYMLVLKNCYRLLALMQE) form a helical membrane-spanning segment. Residues 411–412 (SM) lie on the Extracellular side of the membrane.

The protein belongs to the insect chemoreceptor superfamily. Heteromeric odorant receptor channel (TC 1.A.69) family. Or49a subfamily. Interacts with Orco. Complexes exist early in the endomembrane system in olfactory sensory neurons (OSNs), coupling these complexes to the conserved ciliary trafficking pathway. As to expression, expressed in olfactory sensory neurons in the antenna.

It is found in the cell membrane. In terms of biological role, odorant receptor which mediates acceptance or avoidance behavior, depending on its substrates. The odorant receptor repertoire encodes a large collection of odor stimuli that vary widely in identity, intensity, and duration. May form a complex with Orco to form odorant-sensing units, providing sensitive and prolonged odorant signaling and calcium permeability. Plays an important role in sociosexual interactions since its enhances courtship in a pheromone-dependent manner. This Drosophila melanogaster (Fruit fly) protein is Odorant receptor 47b (Or47b).